We begin with the raw amino-acid sequence, 67 residues long: Beta-defensin 14 (67 aa).

A signal peptide spans 1-22; it reads MRLHYLLFVFLILFLVPAPGDA. Disulfide bonds link C33–C62, C40–C55, and C45–C63.

This sequence belongs to the beta-defensin family.

The protein resides in the secreted. In terms of biological role, has antibacterial activity. The protein is Beta-defensin 14 (Defb14) of Mus musculus (Mouse).